An 878-amino-acid polypeptide reads, in one-letter code: Phosphoenolpyruvate carboxylase (878 aa).

Active-site residues include H138 and K545.

This sequence belongs to the PEPCase type 1 family. Mg(2+) serves as cofactor.

It catalyses the reaction oxaloacetate + phosphate = phosphoenolpyruvate + hydrogencarbonate. In terms of biological role, forms oxaloacetate, a four-carbon dicarboxylic acid source for the tricarboxylic acid cycle. In Shewanella sediminis (strain HAW-EB3), this protein is Phosphoenolpyruvate carboxylase.